Consider the following 229-residue polypeptide: Movement and silencing protein TGBp1 (229 aa).

The (+)RNA virus helicase ATP-binding domain maps to 1 to 114 (MVEFTKRLLL…PAAQVPHFVK (114 aa)). The (+)RNA virus helicase C-terminal domain maps to 115–229 (LFSHRCGLNS…MSFDAADTSA (115 aa)).

This sequence belongs to the Tymovirales TGBp1 protein family. In terms of assembly, homodimer and homooligomer. Interacts with capsid protein. Interacts with host AGO1; this interaction targets the host protein for degradation, thereby suppressing the antiviral RNA silencing.

Its subcellular location is the host cytoplasm. Functionally, transports viral genome to neighboring plant cells directly through plasmosdesmata, without any budding. The movement protein allows efficient cell to cell propagation, by bypassing the host cell wall barrier. Increases plasmodesma size exclusion limit. Acts as a suppressor of RNA-mediated gene silencing, also known as post-transcriptional gene silencing (PTGS), a mechanism of plant viral defense that limits the accumulation of viral RNAs. This Strawberry mild yellow edge-associated virus (SMYEaV) protein is Movement and silencing protein TGBp1.